A 513-amino-acid chain; its full sequence is Histidine ammonia-lyase (513 aa).

A cross-link (5-imidazolinone (Ala-Gly)) is located at residues 144–146 (ASG). S145 is subject to 2,3-didehydroalanine (Ser).

The protein belongs to the PAL/histidase family. In terms of processing, contains an active site 4-methylidene-imidazol-5-one (MIO), which is formed autocatalytically by cyclization and dehydration of residues Ala-Ser-Gly.

Its subcellular location is the cytoplasm. The enzyme catalyses L-histidine = trans-urocanate + NH4(+). It functions in the pathway amino-acid degradation; L-histidine degradation into L-glutamate; N-formimidoyl-L-glutamate from L-histidine: step 1/3. The sequence is that of Histidine ammonia-lyase from Streptococcus pyogenes serotype M49 (strain NZ131).